The following is a 264-amino-acid chain: Thymidylate synthase (264 aa).

Arg21 contributes to the dUMP binding site. His51 is a (6R)-5,10-methylene-5,6,7,8-tetrahydrofolate binding site. 126-127 (RR) contacts dUMP. Cys146 serves as the catalytic Nucleophile. DUMP is bound by residues 166–169 (RSAD), Asn177, and 207–209 (HIY). Residue Asp169 participates in (6R)-5,10-methylene-5,6,7,8-tetrahydrofolate binding. (6R)-5,10-methylene-5,6,7,8-tetrahydrofolate is bound at residue Ala263.

The protein belongs to the thymidylate synthase family. Bacterial-type ThyA subfamily. As to quaternary structure, homodimer.

The protein localises to the cytoplasm. The enzyme catalyses dUMP + (6R)-5,10-methylene-5,6,7,8-tetrahydrofolate = 7,8-dihydrofolate + dTMP. It participates in pyrimidine metabolism; dTTP biosynthesis. In terms of biological role, catalyzes the reductive methylation of 2'-deoxyuridine-5'-monophosphate (dUMP) to 2'-deoxythymidine-5'-monophosphate (dTMP) while utilizing 5,10-methylenetetrahydrofolate (mTHF) as the methyl donor and reductant in the reaction, yielding dihydrofolate (DHF) as a by-product. This enzymatic reaction provides an intracellular de novo source of dTMP, an essential precursor for DNA biosynthesis. This is Thymidylate synthase from Brucella ovis (strain ATCC 25840 / 63/290 / NCTC 10512).